The primary structure comprises 447 residues: Argininosuccinate synthase (447 aa).

ATP contacts are provided by residues 17–25 (AFSGGLDTS) and alanine 43. Position 99 (tyrosine 99) interacts with L-citrulline. Residues glycine 129 and threonine 131 each contribute to the ATP site. Residues threonine 131, asparagine 135, and aspartate 136 each contribute to the L-aspartate site. An L-citrulline-binding site is contributed by asparagine 135. Position 136 (aspartate 136) interacts with ATP. L-citrulline contacts are provided by arginine 139 and serine 192. Aspartate 194 is a binding site for ATP. Positions 201, 203, and 280 each coordinate L-citrulline.

This sequence belongs to the argininosuccinate synthase family. Type 2 subfamily. Homotetramer.

Its subcellular location is the cytoplasm. It carries out the reaction L-citrulline + L-aspartate + ATP = 2-(N(omega)-L-arginino)succinate + AMP + diphosphate + H(+). It functions in the pathway amino-acid biosynthesis; L-arginine biosynthesis; L-arginine from L-ornithine and carbamoyl phosphate: step 2/3. This chain is Argininosuccinate synthase, found in Escherichia coli O8 (strain IAI1).